The primary structure comprises 418 residues: NADH-quinone oxidoreductase subunit D (418 aa).

This sequence belongs to the complex I 49 kDa subunit family. As to quaternary structure, NDH-1 is composed of 14 different subunits. Subunits NuoB, C, D, E, F, and G constitute the peripheral sector of the complex.

The protein resides in the cell inner membrane. The enzyme catalyses a quinone + NADH + 5 H(+)(in) = a quinol + NAD(+) + 4 H(+)(out). Functionally, NDH-1 shuttles electrons from NADH, via FMN and iron-sulfur (Fe-S) centers, to quinones in the respiratory chain. The immediate electron acceptor for the enzyme in this species is believed to be ubiquinone. Couples the redox reaction to proton translocation (for every two electrons transferred, four hydrogen ions are translocated across the cytoplasmic membrane), and thus conserves the redox energy in a proton gradient. In Bordetella pertussis (strain Tohama I / ATCC BAA-589 / NCTC 13251), this protein is NADH-quinone oxidoreductase subunit D.